Here is a 117-residue protein sequence, read N- to C-terminus: Resistin-like gamma (117 aa).

The N-terminal stretch at 1 to 29 (MLTFNKMKTTTCSLLICISLLQLMVPVNT) is a signal peptide. Disulfide bonds link C61–C114, C73–C113, C82–C99, C84–C101, and C88–C103.

It belongs to the resistin/FIZZ family. As to quaternary structure, homodimer. Heterodimer with RETNLB. As to expression, expressed in colon, lung, spleen, pancreas, ileum and bone marrow (at protein level). In colon, found throughout the crypt and surface epithelium, including goblet cells (at protein level). Highest expression is observed in bone marrow, spleen and lung, with lower levels in other tissues. Detected at low levels in granulocytes, but not found in monocytes or lymphocytes. Has very weak expression in white adipose tissue.

It localises to the secreted. Its function is as follows. Probable hormone. Promotes chemotaxis in myeloid cells. This Mus musculus (Mouse) protein is Resistin-like gamma.